A 445-amino-acid chain; its full sequence is C4-dicarboxylate transport protein 2 (445 aa).

8 consecutive transmembrane segments (helical) span residues 24 to 44 (ILYV…WLFP), 62 to 82 (LIKM…IAHI), 96 to 116 (LVYF…VGNL), 163 to 183 (GDIL…MALG), 201 to 221 (FGVI…AMAF), 237 to 257 (LIAL…GLIA), 334 to 354 (ALGV…AMLT), and 366 to 386 (FITL…GMAI).

This sequence belongs to the dicarboxylate/amino acid:cation symporter (DAACS) (TC 2.A.23) family.

It localises to the cell inner membrane. In terms of biological role, responsible for the transport of dicarboxylates such as succinate, fumarate, and malate from the periplasm across the membrane. The sequence is that of C4-dicarboxylate transport protein 2 from Bradyrhizobium sp. (strain ORS 278).